The following is a 6298-amino-acid chain: Adhesion G-protein coupled receptor V1 (6298 aa).

The N-terminal stretch at M1–G28 is a signal peptide. 22 consecutive Calx-beta domains span residues E29 to T116, A132 to R236, V251 to L362, Y389 to L489, P646 to L746, D764 to S862, V877 to L980, A994 to F1094, A1108 to V1208, A1440 to K1540, Q1562 to V1662, T1706 to L1805, I1846 to L1948, T1962 to F2075, H2103 to L2202, V2218 to A2320, T2437 to S2537, F2576 to G2672, V2687 to Y2786, L2810 to T2921, Q2945 to T3044, and D3067 to L3167. Residues E29–A5901 lie on the Extracellular side of the membrane. 6 EAR repeats span residues V3251–G3292, T3293–A3341, R3344–G3389, N3391–G3435, Q3437–M3484, and S3488–S3530. Calx-beta domains lie at Q3581 to L3622, S3636 to L3736, G3772 to A3872, G3919 to V4003, V4017 to T4120, S4135 to L4235, A4251 to T4351, R4384 to I4484, S4507 to L4607, K4628 to L4728, T4989 to T5089, A5281 to L5325, and I5361 to L5461. The region spanning S5740–S5896 is the GAIN-B domain. Cystine bridges form between C5849-C5878 and C5866-C5880. The segment at C5849–S5896 is GPS. The helical transmembrane segment at F5902–F5922 threads the bilayer. The Cytoplasmic portion of the chain corresponds to C5923–K5932. Residues L5933 to Y5953 traverse the membrane as a helical segment. The Extracellular segment spans residues A5954–L5973. A helical transmembrane segment spans residues Y5974–V5994. Residues S5995–C6003 are Cytoplasmic-facing. The chain crosses the membrane as a helical span at residues L6004–I6024. Residues L6025–A6052 are Extracellular-facing. A helical membrane pass occupies residues A6053–I6073. The Cytoplasmic portion of the chain corresponds to H6074 to E6097. A helical transmembrane segment spans residues I6098–H6118. Topologically, residues M6119–M6126 are extracellular. The chain crosses the membrane as a helical span at residues L6127–I6147. Over L6148–L6298 the chain is Cytoplasmic. 2 disordered regions span residues E6206–I6242 and S6264–S6283. Composition is skewed to polar residues over residues S6208–N6226 and V6265–S6283.

It belongs to the G-protein coupled receptor 2 family. Adhesion G-protein coupled receptor (ADGR) subfamily. As to quaternary structure, forms a heterodimer, consisting of a large extracellular region (alpha subunit) non-covalently linked to a seven-transmembrane moiety (beta subunit). Interacts (via the cytoplasmic region) with PDZD7. Component of USH2 complex, composed of ADGRV1, PDZD7, USH2A and WHRN. Interacts with USH2A and WHRN. Interacts (via the cytoplasmic region) with MYO7A (via MyTH4-FERM domains). Post-translationally, autoproteolytically cleaved into 2 subunits, an extracellular alpha subunit and a seven-transmembrane subunit. In terms of tissue distribution, expressed by oligodendrocytes. In midbrain, enriched in the myelinated regions of the superior and inferior colliculi. In the cochlea, expressed in developing hair cells. Expressed by photoreceptors in the retina.

Its subcellular location is the cell membrane. It is found in the cell projection. It localises to the stereocilium membrane. The protein localises to the photoreceptor inner segment. The protein resides in the secreted. G-protein coupled receptor which has an essential role in the development of hearing and vision. Couples to G-alpha(i)-proteins, GNAI1/2/3, G-alpha(q)-proteins, GNAQ, as well as G-alpha(s)-proteins, GNAS, inhibiting adenylate cyclase (AC) activity and cAMP production. Required for the hair bundle ankle formation, which connects growing stereocilia in developing cochlear hair cells of the inner ear. In response to extracellular calcium, activates kinases PKA and PKC to regulate myelination by inhibiting the ubiquitination of MAG, thus enhancing the stability of this protein in myelin-forming cells of the auditory pathway. In retina photoreceptors, the USH2 complex is required for the maintenance of periciliary membrane complex that seems to play a role in regulating intracellular protein transport. Involved in the regulation of bone metabolism. In terms of biological role, cleaved ADGRV1 beta-subunit couples with G-alpha(i)-proteins, GNAI1/2/3, and constitutively inhibits adenylate cyclase (AC) activity with a stronger effect than full ADGRV1. This is Adhesion G-protein coupled receptor V1 from Mus musculus (Mouse).